The primary structure comprises 145 residues: Nucleoside diphosphate kinase (145 aa).

6 residues coordinate ATP: K11, F59, R87, T93, R104, and N114. H117 functions as the Pros-phosphohistidine intermediate in the catalytic mechanism.

It belongs to the NDK family. Mg(2+) serves as cofactor.

It is found in the cytoplasm. It carries out the reaction a 2'-deoxyribonucleoside 5'-diphosphate + ATP = a 2'-deoxyribonucleoside 5'-triphosphate + ADP. The enzyme catalyses a ribonucleoside 5'-diphosphate + ATP = a ribonucleoside 5'-triphosphate + ADP. Its function is as follows. Major role in the synthesis of nucleoside triphosphates other than ATP. The ATP gamma phosphate is transferred to the NDP beta phosphate via a ping-pong mechanism, using a phosphorylated active-site intermediate. This chain is Nucleoside diphosphate kinase, found in Sulfolobus acidocaldarius (strain ATCC 33909 / DSM 639 / JCM 8929 / NBRC 15157 / NCIMB 11770).